We begin with the raw amino-acid sequence, 626 residues long: Chaperone protein HtpG (626 aa).

The interval 1-343 is a; substrate-binding; it reads MHKQTLSFQA…SADLPLNVSR (343 aa). Residues 344–558 are b; sequence ELLQESRAVK…DGDMSTQLAR (215 aa). A c region spans residues 559 to 626; the sequence is MLKQAGQAVP…YVKRVNALLV (68 aa).

The protein belongs to the heat shock protein 90 family. Homodimer.

It localises to the cytoplasm. In terms of biological role, molecular chaperone. Has ATPase activity. The sequence is that of Chaperone protein HtpG from Polaromonas sp. (strain JS666 / ATCC BAA-500).